The primary structure comprises 170 residues: Crossover junction endodeoxyribonuclease RuvC (170 aa).

Active-site residues include Asp-11, Glu-71, and Asp-143. 3 residues coordinate Mg(2+): Asp-11, Glu-71, and Asp-143.

The protein belongs to the RuvC family. In terms of assembly, homodimer which binds Holliday junction (HJ) DNA. The HJ becomes 2-fold symmetrical on binding to RuvC with unstacked arms; it has a different conformation from HJ DNA in complex with RuvA. In the full resolvosome a probable DNA-RuvA(4)-RuvB(12)-RuvC(2) complex forms which resolves the HJ. The cofactor is Mg(2+).

It is found in the cytoplasm. It carries out the reaction Endonucleolytic cleavage at a junction such as a reciprocal single-stranded crossover between two homologous DNA duplexes (Holliday junction).. Its function is as follows. The RuvA-RuvB-RuvC complex processes Holliday junction (HJ) DNA during genetic recombination and DNA repair. Endonuclease that resolves HJ intermediates. Cleaves cruciform DNA by making single-stranded nicks across the HJ at symmetrical positions within the homologous arms, yielding a 5'-phosphate and a 3'-hydroxyl group; requires a central core of homology in the junction. The consensus cleavage sequence is 5'-(A/T)TT(C/G)-3'. Cleavage occurs on the 3'-side of the TT dinucleotide at the point of strand exchange. HJ branch migration catalyzed by RuvA-RuvB allows RuvC to scan DNA until it finds its consensus sequence, where it cleaves and resolves the cruciform DNA. The protein is Crossover junction endodeoxyribonuclease RuvC of Rhizobium meliloti (strain 1021) (Ensifer meliloti).